The sequence spans 171 residues: Shikimate kinase (171 aa).

Position 14 to 19 (14 to 19 (GAGKST)) interacts with ATP. Mg(2+) is bound at residue serine 18. Residues aspartate 36, arginine 60, and glycine 82 each contribute to the substrate site. Position 120 (arginine 120) interacts with ATP. Substrate is bound at residue arginine 139. An ATP-binding site is contributed by glutamine 156.

This sequence belongs to the shikimate kinase family. As to quaternary structure, monomer. It depends on Mg(2+) as a cofactor.

It is found in the cytoplasm. The catalysed reaction is shikimate + ATP = 3-phosphoshikimate + ADP + H(+). It participates in metabolic intermediate biosynthesis; chorismate biosynthesis; chorismate from D-erythrose 4-phosphate and phosphoenolpyruvate: step 5/7. In terms of biological role, catalyzes the specific phosphorylation of the 3-hydroxyl group of shikimic acid using ATP as a cosubstrate. This Alteromonas mediterranea (strain DSM 17117 / CIP 110805 / LMG 28347 / Deep ecotype) protein is Shikimate kinase.